Reading from the N-terminus, the 760-residue chain is Sphingosine kinase B (760 aa).

The tract at residues 1–108 is disordered; the sequence is MENNNNEPAE…NNNNNEPVTS (108 aa). Residues 12–39 are compositionally biased toward basic and acidic residues; that stretch reads VQEKGPKLKNDIDLNDQFKDEKEKKEEI. Over residues 40-106 the composition is skewed to low complexity; sequence SSSSIENKNN…NNNNNNNEPV (67 aa). One can recognise a DAGKc domain in the interval 247–383; the sequence is PKNRKIRILI…LDVCIVQQPT (137 aa). Residues 257 to 259 and Thr-288 contribute to the ATP site; that span reads NPK. 313–316 serves as a coordination point for substrate; it reads SGDG. Catalysis depends on Asp-315, which acts as the Proton donor/acceptor. ATP is bound by residues Glu-320 and 345–347; that span reads GTG. The disordered stretch occupies residues 394-438; the sequence is TVTTTTTTTSPTSASPTITSANNNNNNNNNNNNNNNNNNNNNNNN. Position 461 (Asp-461) interacts with substrate. The ATP site is built by Arg-468 and Arg-474. The segment at 535–605 is disordered; the sequence is DNDNNNKNKN…SSPRSDINMS (71 aa). A compositionally biased stretch (low complexity) spans 549-597; the sequence is EINSTTSNNNNNNNTTTTSTSSSTSTSTSTSSLTATTTTAKSTNSLSSS. Position 734–736 (734–736) interacts with ATP; it reads DGE.

The catalysed reaction is a sphingoid base + ATP = a sphingoid 1-phosphate + ADP + H(+). With respect to regulation, inhibited by N,N,-dimethylsphingosine. In terms of biological role, catalyzes the phosphorylation of sphingosine to form sphingosine-1-phosphate (S1P), which probably acts intracellularly as a second messenger perhaps by promoting cell proliferation. This Dictyostelium discoideum (Social amoeba) protein is Sphingosine kinase B (sgkB).